The following is a 432-amino-acid chain: Tyrosine-protein phosphatase non-receptor type 1 (432 aa).

Residue methionine 1 is modified to N-acetylmethionine. The Tyrosine-protein phosphatase domain maps to 3 to 277 (MEKEFEQIDK…RFSYLAVIEG (275 aa)). Phosphotyrosine is present on tyrosine 20. Serine 50 is subject to Phosphoserine; by PKB/AKT1, CLK1 and CLK2. Residue tyrosine 66 is modified to Phosphotyrosine; by EGFR. Residues aspartate 181 and 215-221 (CSAGIGR) each bind substrate. Cysteine 215 acts as the Phosphocysteine intermediate in catalysis. Cysteine 215 is modified (cysteine persulfide). Cysteine 215 bears the S-nitrosocysteine; in reversibly inhibited form mark. A phosphoserine; by CLK1 and CLK2 mark is found at serine 242 and serine 243. Glutamine 262 serves as a coordination point for substrate. The segment at 297-322 (EDLEPPPEHVPPPPRPPKRTLEPHNG) is disordered. Phosphoserine occurs at positions 335, 362, and 364. A disordered region spans residues 350 to 402 (SRAPSIAVHSMSSMSQDTEVRKRMVGGGLQSAQASVPTEEELSPTEEEQKAHR). Threonine 367 carries the phosphothreonine modification.

The protein belongs to the protein-tyrosine phosphatase family. Non-receptor class 1 subfamily. As to quaternary structure, interacts with EPHA3 (phosphorylated); dephosphorylates EPHA3 and may regulate its trafficking and function. Interacts with MET. Interacts with NCK1. In terms of processing, ser-50 is the major site of phosphorylation as compared to Ser-242 and Ser-243. Activated by phosphorylation at Ser-50. S-nitrosylation of Cys-215 inactivates the enzyme activity. Post-translationally, sulfhydration at Cys-215 following endoplasmic reticulum stress inactivates the enzyme activity, promoting EIF2AK3/PERK activity. Found in several tissues including central nervous system, liver and kidney. A high level of expression was found in the hippocampus.

Its subcellular location is the endoplasmic reticulum membrane. The catalysed reaction is O-phospho-L-tyrosyl-[protein] + H2O = L-tyrosyl-[protein] + phosphate. Functionally, tyrosine-protein phosphatase which acts as a regulator of endoplasmic reticulum unfolded protein response. Mediates dephosphorylation of EIF2AK3/PERK; inactivating the protein kinase activity of EIF2AK3/PERK. May play an important role in CKII- and p60c-src-induced signal transduction cascades. May regulate the EFNA5-EPHA3 signaling pathway which modulates cell reorganization and cell-cell repulsion. May also regulate the hepatocyte growth factor receptor signaling pathway through dephosphorylation of MET. The chain is Tyrosine-protein phosphatase non-receptor type 1 (Ptpn1) from Rattus norvegicus (Rat).